The sequence spans 106 residues: Small ribosomal subunit protein bS20 (106 aa).

Positions 1-20 (MATAKPKKKNPRLASGRKRV) are enriched in basic residues. The tract at residues 1–21 (MATAKPKKKNPRLASGRKRVR) is disordered.

Belongs to the bacterial ribosomal protein bS20 family.

Functionally, binds directly to 16S ribosomal RNA. This is Small ribosomal subunit protein bS20 from Polaromonas naphthalenivorans (strain CJ2).